The following is a 506-amino-acid chain: Methylthioalkylmalate synthase 2, chloroplastic (506 aa).

The N-terminal 49 residues, 1 to 49, are a transit peptide targeting the chloroplast; sequence MASSLLTSSGMIPTTGSTVVGRSVLPFQSSLHSLRLTHSYKNPALFISC. A Pyruvate carboxyltransferase domain is found at 85 to 359; that stretch reads VRVFDTTLRD…YTRIDTRQIM (275 aa).

The protein belongs to the alpha-IPM synthase/homocitrate synthase family.

Its subcellular location is the plastid. The protein localises to the chloroplast. The enzyme catalyses an omega-(methylsulfanyl)-2-oxoalkanoate + acetyl-CoA + H2O = a 2-(omega-methylsulfanyl)alkylmalate + CoA + H(+). Functionally, catalyzes only the first methionine chain elongation cycle. This is Methylthioalkylmalate synthase 2, chloroplastic (MAM2) from Arabidopsis thaliana (Mouse-ear cress).